Consider the following 138-residue polypeptide: Transcription antitermination protein NusB (138 aa).

It belongs to the NusB family.

Involved in transcription antitermination. Required for transcription of ribosomal RNA (rRNA) genes. Binds specifically to the boxA antiterminator sequence of the ribosomal RNA (rrn) operons. The chain is Transcription antitermination protein NusB from Leptospira interrogans serogroup Icterohaemorrhagiae serovar copenhageni (strain Fiocruz L1-130).